Consider the following 43-residue polypeptide: Protein PsbN 2 (43 aa).

The helical transmembrane segment at 4-24 (ATILGISIAAALVGITVLALY) threads the bilayer.

Belongs to the PsbN family.

The protein resides in the cellular thylakoid membrane. Functionally, may play a role in photosystem I and II biogenesis. In Microcystis aeruginosa (strain NIES-843 / IAM M-2473), this protein is Protein PsbN 2.